Consider the following 370-residue polypeptide: Phospho-N-acetylmuramoyl-pentapeptide-transferase (370 aa).

10 consecutive transmembrane segments (helical) span residues A29–L49, G70–W90, L93–F113, K133–G153, G177–S197, G209–S229, V251–A271, V273–M293, I298–V318, and V349–I369.

This sequence belongs to the glycosyltransferase 4 family. MraY subfamily. It depends on Mg(2+) as a cofactor.

It localises to the cell inner membrane. The enzyme catalyses UDP-N-acetyl-alpha-D-muramoyl-L-alanyl-gamma-D-glutamyl-meso-2,6-diaminopimeloyl-D-alanyl-D-alanine + di-trans,octa-cis-undecaprenyl phosphate = di-trans,octa-cis-undecaprenyl diphospho-N-acetyl-alpha-D-muramoyl-L-alanyl-D-glutamyl-meso-2,6-diaminopimeloyl-D-alanyl-D-alanine + UMP. It functions in the pathway cell wall biogenesis; peptidoglycan biosynthesis. Its function is as follows. Catalyzes the initial step of the lipid cycle reactions in the biosynthesis of the cell wall peptidoglycan: transfers peptidoglycan precursor phospho-MurNAc-pentapeptide from UDP-MurNAc-pentapeptide onto the lipid carrier undecaprenyl phosphate, yielding undecaprenyl-pyrophosphoryl-MurNAc-pentapeptide, known as lipid I. This chain is Phospho-N-acetylmuramoyl-pentapeptide-transferase, found in Leptospira biflexa serovar Patoc (strain Patoc 1 / Ames).